The chain runs to 407 residues: Proteasome-activating nucleotidase (407 aa).

Residues 22 to 67 adopt a coiled-coil conformation; the sequence is KEKTQIAELESKVLRLELKNKDISRENVQIKKENEILKRELDKLRI. Residues 192–197 and His-331 contribute to the ATP site; that span reads GTGKTL. A docks into pockets in the proteasome alpha-ring to cause gate opening region spans residues 405-407; sequence MYG.

Belongs to the AAA ATPase family. As to quaternary structure, homohexamer. The hexameric complex has a two-ring architecture resembling a top hat that caps the 20S proteasome core at one or both ends. Upon ATP-binding, the C-terminus of PAN interacts with the alpha-rings of the proteasome core by binding to the intersubunit pockets.

It is found in the cytoplasm. Its function is as follows. ATPase which is responsible for recognizing, binding, unfolding and translocation of substrate proteins into the archaeal 20S proteasome core particle. Is essential for opening the gate of the 20S proteasome via an interaction with its C-terminus, thereby allowing substrate entry and access to the site of proteolysis. Thus, the C-termini of the proteasomal ATPase function like a 'key in a lock' to induce gate opening and therefore regulate proteolysis. Unfolding activity requires energy from ATP hydrolysis, whereas ATP binding alone promotes ATPase-20S proteasome association which triggers gate opening, and supports translocation of unfolded substrates. In Methanococcus maripaludis (strain C6 / ATCC BAA-1332), this protein is Proteasome-activating nucleotidase.